A 329-amino-acid polypeptide reads, in one-letter code: Carbonic anhydrase (329 aa).

The interval 1-108 (MSTASAFAIN…AAARIDQITA (108 aa)) is chloroplast transit peptide-like.

Belongs to the beta-class carbonic anhydrase family. As to quaternary structure, homohexamer.

Its subcellular location is the cytoplasm. It catalyses the reaction hydrogencarbonate + H(+) = CO2 + H2O. Functionally, reversible hydration of carbon dioxide. The protein is Carbonic anhydrase of Flaveria pringlei.